A 197-amino-acid polypeptide reads, in one-letter code: Adenylate kinase 1 (197 aa).

ATP is bound at residue 19 to 24 (GSGKGT). The tract at residues 39-68 (SSGDLLRAEVQSGSPKGKELKAMMERGELV) is NMP. Residues Ser40, Arg45, 95–98 (GYPR), and Gln102 contribute to the AMP site. The LID stretch occupies residues 132–142 (KRAETSNRVDD). An ATP-binding site is contributed by Arg133. 2 residues coordinate AMP: Arg139 and Arg150. Gly178 contacts ATP.

Belongs to the adenylate kinase family. AK1 subfamily. In terms of assembly, monomer. Mg(2+) serves as cofactor.

It is found in the cytoplasm. It carries out the reaction AMP + ATP = 2 ADP. Its pathway is purine metabolism; purine nucleotide biosynthesis. In terms of biological role, catalyzes the reversible transfer of the terminal phosphate group between ATP and AMP. Plays an important role in cellular energy homeostasis and in adenine nucleotide metabolism. In Schistosoma mansoni (Blood fluke), this protein is Adenylate kinase 1.